Consider the following 504-residue polypeptide: DnaJ homolog subfamily C member 3 (504 aa).

The signal sequence occupies residues 1–31 (MVAPGSVRSRLGAVFPFLLVLVDLQYEGAEC). TPR repeat units lie at residues 37–70 (VEKHLELGKKLLAAGQLADALSQFHAAVDGDPDN), 72–104 (IAYYRRATVFLAMGKSKAALPDLTRVIELKMDF), 105–138 (TAARLQRGHLLLKQGRLAEAEDDFKKVLKSNPSE), 154–187 (MQRLRAQALDAFDSADYTAAITFLDEILEVCVWD), 188–221 (AELRELRAECFIKEGEPRKAISDLKAASKLKNDN), 222–255 (TEAFYKISILYYQLGDHELSLSEVRECLKLDQDH), 268–301 (LNKLIGSAEELIRDGRYTDATSKYESVMKAEPSV), 306–339 (VRSKERICHCFSKDEKPVEAIKICSEVLQLEPDN), and 340–373 (VNALKDRAEAYLIEEMYDEAIQDYEAAQEQNEND). Cysteines 248 and 258 form a disulfide. Residue Ser-274 is modified to Phosphoserine. A disulfide bridge links Cys-313 with Cys-329. The flexible linker stretch occupies residues 375–393 (QIREGLEKAQRLLKQSQKR). In terms of domain architecture, J spans 394–462 (DYYKILGVKR…EMRRKFDDGE (69 aa)). Positions 451–481 (DPEMRRKFDDGEDPLDAETQQGGGSNPFHRS) are disordered. Residue Ser-475 is modified to Phosphoserine.

As to quaternary structure, interacts with EIF2AK2 and EIF2AK3. Forms a trimeric complex with DNAJB1 and HSPA8. Interacts with THAP12.

It is found in the endoplasmic reticulum. Functionally, involved in the unfolded protein response (UPR) during ER stress. Co-chaperone of HSPA8/HSC70, it stimulates its ATPase activity. May inhibit both the autophosphorylation of EIF2AK2/PKR and the ability of EIF2AK2 to catalyze phosphorylation of the EIF2A. May inhibit EIF2AK3/PERK activity. This Rattus norvegicus (Rat) protein is DnaJ homolog subfamily C member 3 (Dnajc3).